A 359-amino-acid chain; its full sequence is Peptide chain release factor 1 (359 aa).

N5-methylglutamine is present on Gln236.

It belongs to the prokaryotic/mitochondrial release factor family. Post-translationally, methylated by PrmC. Methylation increases the termination efficiency of RF1.

Its subcellular location is the cytoplasm. Functionally, peptide chain release factor 1 directs the termination of translation in response to the peptide chain termination codons UAG and UAA. The sequence is that of Peptide chain release factor 1 from Streptococcus pneumoniae serotype 4 (strain ATCC BAA-334 / TIGR4).